A 107-amino-acid polypeptide reads, in one-letter code: Ferredoxin Fdx8 (107 aa).

4Fe-4S ferredoxin-type domains lie at methionine 1–alanine 31 and leucine 50–glutamate 79. Residues cysteine 9, cysteine 13, cysteine 17, cysteine 21, cysteine 59, cysteine 62, cysteine 65, and cysteine 69 each coordinate [4Fe-4S] cluster.

[4Fe-4S] cluster is required as a cofactor.

Ferredoxins are iron-sulfur proteins that transfer electrons in a wide variety of metabolic reactions. Fdx2 can receive electrons from both FdR_A and FdR_B ferredoxin reductases, with a preference for FdR_B compared with FdR_A, and transfer the electrons to the cytochrome P450 CYP260A1. This is Ferredoxin Fdx8 from Sorangium cellulosum (strain So ce56) (Polyangium cellulosum (strain So ce56)).